A 94-amino-acid chain; its full sequence is Co-chaperonin GroES (94 aa).

The protein belongs to the GroES chaperonin family. As to quaternary structure, heptamer of 7 subunits arranged in a ring. Interacts with the chaperonin GroEL.

The protein localises to the cytoplasm. Functionally, together with the chaperonin GroEL, plays an essential role in assisting protein folding. The GroEL-GroES system forms a nano-cage that allows encapsulation of the non-native substrate proteins and provides a physical environment optimized to promote and accelerate protein folding. GroES binds to the apical surface of the GroEL ring, thereby capping the opening of the GroEL channel. This chain is Co-chaperonin GroES, found in Geobacillus sp. (strain WCH70).